A 211-amino-acid chain; its full sequence is Large ribosomal subunit protein uL3 (211 aa).

Glutamine 150 is modified (N5-methylglutamine).

The protein belongs to the universal ribosomal protein uL3 family. Part of the 50S ribosomal subunit. Forms a cluster with proteins L14 and L19. Methylated by PrmB.

Functionally, one of the primary rRNA binding proteins, it binds directly near the 3'-end of the 23S rRNA, where it nucleates assembly of the 50S subunit. This chain is Large ribosomal subunit protein uL3, found in Pseudomonas savastanoi pv. phaseolicola (strain 1448A / Race 6) (Pseudomonas syringae pv. phaseolicola (strain 1448A / Race 6)).